Here is a 297-residue protein sequence, read N- to C-terminus: Probable endonuclease 4 (297 aa).

The Zn(2+) site is built by histidine 69, histidine 110, glutamate 145, aspartate 179, histidine 182, histidine 214, aspartate 227, histidine 229, and glutamate 259.

It belongs to the AP endonuclease 2 family. It depends on Zn(2+) as a cofactor.

It carries out the reaction Endonucleolytic cleavage to 5'-phosphooligonucleotide end-products.. Functionally, endonuclease IV plays a role in DNA repair. It cleaves phosphodiester bonds at apurinic or apyrimidinic (AP) sites, generating a 3'-hydroxyl group and a 5'-terminal sugar phosphate. The chain is Probable endonuclease 4 from Bacillus licheniformis (strain ATCC 14580 / DSM 13 / JCM 2505 / CCUG 7422 / NBRC 12200 / NCIMB 9375 / NCTC 10341 / NRRL NRS-1264 / Gibson 46).